A 284-amino-acid chain; its full sequence is Homeobox protein SIX1 (284 aa).

Positions 124–183 (GEETSYCFKEKSRGVLREWYAHNPYPSPREKRELAEATGLTTTQVSNWFKNRRQRDRAAE) form a DNA-binding region, homeobox. The tract at residues 168–269 (VSNWFKNRRQ…LQTHQHQLQD (102 aa)) is disordered. Basic and acidic residues predominate over residues 179–190 (DRAAEAKERENT). Residues 242–269 (RSSNYSLPGLTASQPSHGLQTHQHQLQD) are compositionally biased toward polar residues.

It belongs to the SIX/Sine oculis homeobox family. In terms of assembly, interacts with DACH1. Interacts with EYA1. Interacts with EYA2. Interacts with CDH1. Interacts with TBX18. Interacts with CEBPA. Interacts with CEBPB. Interacts with EBF2. Post-translationally, phosphorylated during interphase; becomes hyperphosphorylated during mitosis. Hyperphosphorylation impairs binding to promoter elements. In terms of processing, ubiquitinated by the anaphase promoting complex (APC), leading to its proteasomal degradation. Specifically expressed in skeletal muscle.

The protein resides in the nucleus. It is found in the cytoplasm. Transcription factor that is involved in the regulation of cell proliferation, apoptosis and embryonic development. Plays an important role in the development of several organs, including kidney, muscle and inner ear. Depending on context, functions as a transcriptional repressor or activator. Lacks an activation domain, and requires interaction with EYA family members for transcription activation. Mediates nuclear translocation of EYA1 and EYA2. Binds the 5'-TCA[AG][AG]TTNC-3' motif present in the MEF3 element in the MYOG promoter and CIDEA enhancer. Regulates the expression of numerous genes, including MYC, CCND1 and EZR. Acts as an activator of the IGFBP5 promoter, probably coactivated by EYA2. Repression of precursor cell proliferation in myoblasts is switched to activation through recruitment of EYA3 to the SIX1-DACH1 complex. During myogenesis, seems to act together with EYA2 and DACH2. Regulates the expression of CCNA1. Promotes brown adipocyte differentiation. The polypeptide is Homeobox protein SIX1 (SIX1) (Homo sapiens (Human)).